Consider the following 70-residue polypeptide: UPF0337 protein YjbJ (70 aa).

The protein belongs to the UPF0337 (CsbD) family.

The protein is UPF0337 protein YjbJ (yjbJ) of Salmonella typhi.